A 204-amino-acid chain; its full sequence is Transmembrane protein 253 (204 aa).

4 consecutive transmembrane segments (helical) span residues 33 to 53, 62 to 82, 96 to 116, and 138 to 158; these read LVLA…TISV, LVTA…IITL, MMIS…IEVM, and LSAE…LFLL. The segment at 184–204 is disordered; it reads EEVSGLENGPVVASTGNRTDE.

It is found in the membrane. This is Transmembrane protein 253 (Tmem253) from Mus musculus (Mouse).